Consider the following 115-residue polypeptide: CRISPR-associated endoribonuclease Cas2 (115 aa).

A Mg(2+)-binding site is contributed by D22.

Belongs to the CRISPR-associated endoribonuclease Cas2 protein family. As to quaternary structure, homodimer, forms a heterotetramer with a Cas1 homodimer. Mg(2+) is required as a cofactor.

Its function is as follows. CRISPR (clustered regularly interspaced short palindromic repeat), is an adaptive immune system that provides protection against mobile genetic elements (viruses, transposable elements and conjugative plasmids). CRISPR clusters contain sequences complementary to antecedent mobile elements and target invading nucleic acids. CRISPR clusters are transcribed and processed into CRISPR RNA (crRNA). Functions as a ssRNA-specific endoribonuclease. Involved in the integration of spacer DNA into the CRISPR cassette. In Flavobacterium psychrophilum (strain ATCC 49511 / DSM 21280 / CIP 103535 / JIP02/86), this protein is CRISPR-associated endoribonuclease Cas2.